Here is a 349-residue protein sequence, read N- to C-terminus: uncharacterized protein (349 aa).

An N-terminal signal peptide occupies residues M1–S29.

This is an uncharacterized protein from Borreliella burgdorferi (strain ATCC 35210 / DSM 4680 / CIP 102532 / B31) (Borrelia burgdorferi).